Here is a 511-residue protein sequence, read N- to C-terminus: Transcription factor bHLH28 (511 aa).

The bHLH domain maps to 339 to 388 (DKPLNHVEAERMRREKLNHRFYALRAVVPNVSKMDKTSLLEDAVCYINEL).

Homodimer.

The protein localises to the nucleus. The protein is Transcription factor bHLH28 (BHLH28) of Arabidopsis thaliana (Mouse-ear cress).